The sequence spans 227 residues: Urease accessory protein UreF (227 aa).

The protein belongs to the UreF family. As to quaternary structure, ureD, UreF and UreG form a complex that acts as a GTP-hydrolysis-dependent molecular chaperone, activating the urease apoprotein by helping to assemble the nickel containing metallocenter of UreC. The UreE protein probably delivers the nickel.

The protein localises to the cytoplasm. Functionally, required for maturation of urease via the functional incorporation of the urease nickel metallocenter. In Actinobacillus pleuropneumoniae (Haemophilus pleuropneumoniae), this protein is Urease accessory protein UreF.